A 722-amino-acid chain; its full sequence is Threonine--tRNA ligase 1, cytoplasmic (722 aa).

Polar residues predominate over residues 1-10 (MSQEKASSPS). A disordered region spans residues 1–48 (MSQEKASSPSGKMDGEKPVDASEEKRKEGGKKKSKDGGGDGGRAELNP). Residues 13 to 27 (MDGEKPVDASEEKRK) show a composition bias toward basic and acidic residues. The TGS domain occupies 78 to 142 (DSKPIKVTLP…ETDCTLELLK (65 aa)). The residue at position 242 (Lys-242) is an N6-acetyllysine. At Thr-245 the chain carries Phosphothreonine. Tyr-297 carries the phosphotyrosine modification. At Thr-452 the chain carries Phosphothreonine.

Belongs to the class-II aminoacyl-tRNA synthetase family. Homodimer. Post-translationally, ISGylated.

The protein resides in the cytoplasm. It catalyses the reaction tRNA(Thr) + L-threonine + ATP = L-threonyl-tRNA(Thr) + AMP + diphosphate + H(+). In terms of biological role, catalyzes the attachment of threonine to tRNA(Thr) in a two-step reaction: threonine is first activated by ATP to form Thr-AMP and then transferred to the acceptor end of tRNA(Thr). Also edits incorrectly charged tRNA(Thr) via its editing domain, at the post-transfer stage. The sequence is that of Threonine--tRNA ligase 1, cytoplasmic (Tars1) from Mus musculus (Mouse).